Consider the following 100-residue polypeptide: Urease subunit gamma (100 aa).

Belongs to the urease gamma subunit family. As to quaternary structure, heterotrimer of UreA (gamma), UreB (beta) and UreC (alpha) subunits. Three heterotrimers associate to form the active enzyme.

The protein localises to the cytoplasm. The enzyme catalyses urea + 2 H2O + H(+) = hydrogencarbonate + 2 NH4(+). It participates in nitrogen metabolism; urea degradation; CO(2) and NH(3) from urea (urease route): step 1/1. The polypeptide is Urease subunit gamma (Delftia acidovorans (strain DSM 14801 / SPH-1)).